A 223-amino-acid polypeptide reads, in one-letter code: Serum amyloid P-component (223 aa).

An N-terminal signal peptide occupies residues 1-19 (MDKMLFWVSVFTIFLDVFA). Residues 24-223 (DKKVFVFPRE…YVIIKPRVWD (200 aa)) enclose the Pentraxin (PTX) domain. The cysteines at positions 55 and 114 are disulfide-linked. Positions 77, 78, 155, 156, 157, and 167 each coordinate Ca(2+). Asparagine 198 carries an N-linked (GlcNAc...) asparagine glycan.

The protein belongs to the pentraxin family. In terms of assembly, homopentamer. Pentraxin (or pentaxin) have a discoid arrangement of 5 non-covalently bound subunits. The cofactor is Ca(2+).

It localises to the secreted. The chain is Serum amyloid P-component (PTX2) from Cavia porcellus (Guinea pig).